The chain runs to 1317 residues: ABC transporter C family member 14 (1317 aa).

The region spanning 119 to 404 (NKYALISNIF…LPEDIYKAIG (286 aa)) is the ABC transmembrane type-1 1 domain. 5 helical membrane-spanning segments follow: residues 127-147 (IFIT…INYI), 156-176 (SILK…GQSI), 249-269 (ILIL…VGFG), 341-361 (VLFW…VLVS), and 375-395 (LDVT…LIYL). The disordered stretch occupies residues 426 to 451 (ENNQNINFNNNNNNNNNNKNNNNNDD). Residues 427–449 (NNQNINFNNNNNNNNNNKNNNNN) are compositionally biased toward low complexity. An ABC transporter 1 domain is found at 490–710 (ENEENIKINE…ISDKNDPNLI (221 aa)). An ATP-binding site is contributed by 522–529 (GVVGSGKT). 5 helical membrane passes run 734-754 (YFSY…FFIG), 778-798 (DSFY…LLMI), 871-891 (LISI…LFII), 969-989 (LEVM…LFTS), and 992-1012 (GLAA…SWGV). The ABC transmembrane type-1 2 domain occupies 744-1027 (LFITISLFFI…LEVKMNSFQR (284 aa)). The ABC transporter 2 domain maps to 1071–1306 (IEFKNVEIKY…PNSKFNKLIK (236 aa)). 1105-1112 (GRTGAGKT) contributes to the ATP binding site.

It belongs to the ABC transporter superfamily. ABCC family. Conjugate transporter (TC 3.A.1.208) subfamily.

The protein localises to the membrane. The protein is ABC transporter C family member 14 (abcC14) of Dictyostelium discoideum (Social amoeba).